We begin with the raw amino-acid sequence, 893 residues long: Protein translocase subunit SecA (893 aa).

ATP is bound by residues Gln-87, 105–109, and Asp-512; that span reads GEGKT. Residues 840-849 are compositionally biased toward basic and acidic residues; sequence VEEQHRKSEE. The tract at residues 840–893 is disordered; it reads VEEQHRKSEEVPMDFQHQSASSPSEQAQTPRVGRNEPCPCGSGKKYKQCHGKLA. A compositionally biased stretch (polar residues) spans 855–868; it reads QHQSASSPSEQAQT. Zn(2+)-binding residues include Cys-877, Cys-879, Cys-888, and His-889. Residues 883–893 show a composition bias toward basic residues; it reads KKYKQCHGKLA.

This sequence belongs to the SecA family. In terms of assembly, monomer and homodimer. Part of the essential Sec protein translocation apparatus which comprises SecA, SecYEG and auxiliary proteins SecDF-YajC and YidC. Zn(2+) serves as cofactor.

The protein resides in the cell inner membrane. Its subcellular location is the cytoplasm. It carries out the reaction ATP + H2O + cellular proteinSide 1 = ADP + phosphate + cellular proteinSide 2.. Functionally, part of the Sec protein translocase complex. Interacts with the SecYEG preprotein conducting channel. Has a central role in coupling the hydrolysis of ATP to the transfer of proteins into and across the cell membrane, serving both as a receptor for the preprotein-SecB complex and as an ATP-driven molecular motor driving the stepwise translocation of polypeptide chains across the membrane. The polypeptide is Protein translocase subunit SecA (Colwellia psychrerythraea (strain 34H / ATCC BAA-681) (Vibrio psychroerythus)).